A 56-amino-acid polypeptide reads, in one-letter code: Large ribosomal subunit protein bL33 (56 aa).

The protein belongs to the bacterial ribosomal protein bL33 family.

This Ehrlichia canis (strain Jake) protein is Large ribosomal subunit protein bL33.